A 79-amino-acid polypeptide reads, in one-letter code: U-actitoxin-Oulsp1 (79 aa).

An N-terminal signal peptide occupies residues 1 to 21 (MNTKLVVVFLLSAILFVSVTA). A propeptide spanning residues 22–43 (SRPGKDLERDEAYETYDDENKR) is cleaved from the precursor. One can recognise a ShKT domain in the interval 45–79 (CKDVFPAATCRHAKSVGNCSSEKYKRNCAITCGAC). Disulfide bonds link C45–C79, C54–C72, and C63–C76. Residues 67-68 (KY) form a crucial for binding to potassium channels region.

It belongs to the sea anemone type 1 potassium channel toxin family. Type 1b subfamily. Two similar peptides (OspTx2a-p1 and -p2) are obtained after synthesis and oxidative folding. They may differ by a D-Cys at position 76 (corresponding to OspTx2a-p2). Since C-terminal Cys residues are prone to racemization during solid-phase peptide synthesis, and if the presence of a D-amino acid is correct, it is probable that OspTx2a-p1 (L-Cys-76 form) corresponds to the native peptide.

It is found in the secreted. In terms of biological role, toxin that weakly blocks the two voltage-gated potassium channels on Kv1.2/KCNA2 (IC(50)=1.8-2.5 uM) and Kv1.6/KCNA6 (IC(50)=5.6-6.2 uM). The polypeptide is U-actitoxin-Oulsp1 (Oulactis sp. (Sea anemone)).